We begin with the raw amino-acid sequence, 138 residues long: Low molecular weight protein-tyrosine-phosphatase PtpB (138 aa).

Residue Cys7 is the Nucleophile of the active site. The active site involves Arg13. Asp111 functions as the Proton donor in the catalytic mechanism.

This sequence belongs to the low molecular weight phosphotyrosine protein phosphatase family.

It catalyses the reaction O-phospho-L-tyrosyl-[protein] + H2O = L-tyrosyl-[protein] + phosphate. Its function is as follows. Dephosphorylates the phosphotyrosine-containing proteins. In Staphylococcus haemolyticus (strain JCSC1435), this protein is Low molecular weight protein-tyrosine-phosphatase PtpB (ptpB).